Consider the following 425-residue polypeptide: 3-phosphoshikimate 1-carboxyvinyltransferase (425 aa).

The 3-phosphoshikimate site is built by Lys22, Ser23, and Arg27. Phosphoenolpyruvate is bound at residue Lys22. 2 residues coordinate phosphoenolpyruvate: Gly95 and Arg123. 3-phosphoshikimate-binding residues include Ser169, Ser170, Gln171, Ser197, Asp313, Asn336, and Lys340. Gln171 contributes to the phosphoenolpyruvate binding site. The active-site Proton acceptor is the Asp313. Phosphoenolpyruvate-binding residues include Arg344, Arg386, and Lys411.

Belongs to the EPSP synthase family. Monomer.

Its subcellular location is the cytoplasm. It catalyses the reaction 3-phosphoshikimate + phosphoenolpyruvate = 5-O-(1-carboxyvinyl)-3-phosphoshikimate + phosphate. It participates in metabolic intermediate biosynthesis; chorismate biosynthesis; chorismate from D-erythrose 4-phosphate and phosphoenolpyruvate: step 6/7. Functionally, catalyzes the transfer of the enolpyruvyl moiety of phosphoenolpyruvate (PEP) to the 5-hydroxyl of shikimate-3-phosphate (S3P) to produce enolpyruvyl shikimate-3-phosphate and inorganic phosphate. This Pseudoalteromonas translucida (strain TAC 125) protein is 3-phosphoshikimate 1-carboxyvinyltransferase.